Here is a 175-residue protein sequence, read N- to C-terminus: Alpha-crystallin B chain (175 aa).

Methionine 1 is subject to N-acetylmethionine. Serine 19 is subject to Phosphoserine. O-linked (GlcNAc) serine glycosylation is present at serine 41. A phosphoserine mark is found at serine 45 and serine 59. Residues 56–164 enclose the sHSP domain; sequence RAPSWIDTGL…PERTIPITRE (109 aa). Histidine 83 is a binding site for Zn(2+). Lysine 92 carries the N6-acetyllysine modification. Residues histidine 104, glutamate 106, histidine 111, and histidine 119 each coordinate Zn(2+). Positions 139 to 175 are disordered; it reads SDGVLTMNGPRKQASGPERTIPITREEKPAVTAAPKK. Lysine 166 carries the N6-acetyllysine modification. Residue threonine 170 is glycosylated (O-linked (GlcNAc) threonine).

The protein belongs to the small heat shock protein (HSP20) family. In terms of assembly, heteromer composed of three CRYAA and one CRYAB subunits. Aggregates with homologous proteins, including the small heat shock protein HSPB1, to form large heteromeric complexes. Inter-subunit bridging via zinc ions enhances stability, which is crucial as there is no protein turn over in the lens. Interacts with HSPBAP1 and TTN/titin. Interacts with TMEM109; in the cellular response to DNA damage. Interacts with DES; binds rapidly during early stages of DES filament assembly and a reduced binding seen in the later stages. Interacts with ATP6V1A and with MTOR, forming a ternary complex.

It is found in the cytoplasm. Its subcellular location is the nucleus. The protein localises to the secreted. The protein resides in the lysosome. In terms of biological role, may contribute to the transparency and refractive index of the lens. Has chaperone-like activity, preventing aggregation of various proteins under a wide range of stress conditions. In lens epithelial cells, stabilizes the ATP6V1A protein, preventing its degradation by the proteasome. This is Alpha-crystallin B chain (CRYAB) from Ovis aries (Sheep).